The chain runs to 608 residues: Threonine--tRNA ligase (608 aa).

Residues 1 to 144 (MRILLIHSDY…SRTITAEEEE (144 aa)) form an editing domain region. Positions 195 to 489 (PHVKLMREKE…ELDEKAPMLP (295 aa)) are catalytic. 3 residues coordinate Zn(2+): C286, H338, and H459.

Belongs to the class-II aminoacyl-tRNA synthetase family. In terms of assembly, homodimer. Zn(2+) is required as a cofactor.

Its subcellular location is the cytoplasm. It catalyses the reaction tRNA(Thr) + L-threonine + ATP = L-threonyl-tRNA(Thr) + AMP + diphosphate + H(+). In terms of biological role, catalyzes the attachment of threonine to tRNA(Thr) in a two-step reaction: L-threonine is first activated by ATP to form Thr-AMP and then transferred to the acceptor end of tRNA(Thr). Also edits incorrectly charged L-seryl-tRNA(Thr). The sequence is that of Threonine--tRNA ligase from Methanobrevibacter smithii (strain ATCC 35061 / DSM 861 / OCM 144 / PS).